Reading from the N-terminus, the 234-residue chain is Small ribosomal subunit protein uS2 (234 aa).

The protein belongs to the universal ribosomal protein uS2 family.

In Clostridium kluyveri (strain NBRC 12016), this protein is Small ribosomal subunit protein uS2.